Consider the following 119-residue polypeptide: Small ribosomal subunit protein bS6 (119 aa).

This sequence belongs to the bacterial ribosomal protein bS6 family.

Its function is as follows. Binds together with bS18 to 16S ribosomal RNA. This chain is Small ribosomal subunit protein bS6, found in Thermosipho africanus (strain TCF52B).